The primary structure comprises 853 residues: Envelope glycoprotein gp160 (853 aa).

An N-terminal signal peptide occupies residues 1-31 (MRVRGIERNCQNLWKWGIMLLGILMTCSNAD). At 32–681 (NLWVTVYYGV…ITQWLWYIKI (650 aa)) the chain is on the extracellular side. Cysteine 53 and cysteine 73 are disulfide-bonded. 14 N-linked (GlcNAc...) asparagine; by host glycosylation sites follow: asparagine 87, asparagine 137, asparagine 144, asparagine 153, asparagine 157, asparagine 185, asparagine 188, asparagine 198, asparagine 235, asparagine 242, asparagine 263, asparagine 277, asparagine 290, and asparagine 296. 5 disulfide bridges follow: cysteine 118–cysteine 206, cysteine 125–cysteine 197, cysteine 130–cysteine 154, cysteine 219–cysteine 248, and cysteine 229–cysteine 240. The V1 stretch occupies residues 130-153 (CIDEVMENVTMKNNNVTEEIRMKN). The V2 stretch occupies residues 154 to 197 (CSFNITTVVRDKTKQVHALFYRLDIVPIDNDNSTNSTNYRLINC). The interval 297-329 (CTRPYRNIRQRTSIGLGQALYTTKTRSIIGQAY) is V3. Cysteine 297 and cysteine 330 are disulfide-bonded. N-linked (GlcNAc...) asparagine; by host glycans are attached at residues asparagine 331, asparagine 338, and asparagine 353. Residues 362-372 (SSGGDPEITTH) form a CD4-binding loop region. Cystine bridges form between cysteine 376-cysteine 442 and cysteine 383-cysteine 415. Positions 383–415 (CNTSGLFNSTWDISKSEWANSTESDDKPITLQC) are V4. Asparagine 384, asparagine 390, asparagine 402, asparagine 441, asparagine 445, asparagine 458, asparagine 459, and asparagine 462 each carry an N-linked (GlcNAc...) asparagine; by host glycan. V5 regions lie at residues 457–468 (TNNSSNETFRPG) and 460–468 (SSNETFRPG). The interval 509 to 529 (AIGLGAMFLGFLGAAGSTMGA) is fusion peptide. The immunosuppression stretch occupies residues 571 to 589 (KQLQARILAVERYLKDQQL). Cysteine 595 and cysteine 601 are oxidised to a cystine. N-linked (GlcNAc...) asparagine; by host glycans are attached at residues asparagine 608, asparagine 613, asparagine 622, asparagine 634, and asparagine 671. Residues 630 to 664 (REIDNYTGLIYRLIEESQTQQEKNEQELLELDKWA) are a coiled coil. The MPER; binding to GalCer stretch occupies residues 659 to 680 (ELDKWASLWNWFNITQWLWYIK). A helical membrane pass occupies residues 682-702 (FIMIVGGLIGLRIVFAVLSLV). Residues 703–853 (NRVRQGYSPL…IRQGLERLLL (151 aa)) are Cytoplasmic-facing. The short motif at 709 to 712 (YSPL) is the YXXL motif; contains endocytosis signal element. S-palmitoyl cysteine; by host attachment occurs at residues cysteine 761 and cysteine 834. The short motif at 852–853 (LL) is the Di-leucine internalization motif element.

Belongs to the HIV-1 env protein family. The mature envelope protein (Env) consists of a homotrimer of non-covalently associated gp120-gp41 heterodimers. The resulting complex protrudes from the virus surface as a spike. There seems to be as few as 10 spikes on the average virion. Interacts with host CD4, CCR5 and CXCR4. Gp120 also interacts with the C-type lectins CD209/DC-SIGN and CLEC4M/DC-SIGNR (collectively referred to as DC-SIGN(R)). Gp120 and gp41 interact with GalCer. Gp120 interacts with host ITGA4/ITGB7 complex; on CD4+ T-cells, this interaction results in rapid activation of integrin ITGAL/LFA-1, which facilitates efficient cell-to-cell spreading of HIV-1. Gp120 interacts with cell-associated heparan sulfate; this interaction increases virus infectivity on permissive cells and may be involved in infection of CD4- cells. As to quaternary structure, the mature envelope protein (Env) consists of a homotrimer of non-covalently associated gp120-gp41 heterodimers. The resulting complex protrudes from the virus surface as a spike. There seems to be as few as 10 spikes on the average virion. Post-translationally, highly glycosylated by host. The high number of glycan on the protein is reffered to as 'glycan shield' because it contributes to hide protein sequence from adaptive immune system. In terms of processing, palmitoylation of the transmembrane protein and of Env polyprotein (prior to its proteolytic cleavage) is essential for their association with host cell membrane lipid rafts. Palmitoylation is therefore required for envelope trafficking to classical lipid rafts, but not for viral replication. Specific enzymatic cleavages in vivo yield mature proteins. Envelope glycoproteins are synthesized as an inactive precursor that is heavily N-glycosylated and processed likely by host cell furin in the Golgi to yield the mature SU and TM proteins. The cleavage site between SU and TM requires the minimal sequence [KR]-X-[KR]-R. About 2 of the 9 disulfide bonds of gp41 are reduced by P4HB/PDI, following binding to CD4 receptor.

The protein localises to the virion membrane. It is found in the host cell membrane. It localises to the host endosome membrane. Functionally, oligomerizes in the host endoplasmic reticulum into predominantly trimers. In a second time, gp160 transits in the host Golgi, where glycosylation is completed. The precursor is then proteolytically cleaved in the trans-Golgi and thereby activated by cellular furin or furin-like proteases to produce gp120 and gp41. In terms of biological role, attaches the virus to the host lymphoid cell by binding to the primary receptor CD4. This interaction induces a structural rearrangement creating a high affinity binding site for a chemokine coreceptor like CXCR4 and/or CCR5. Acts as a ligand for CD209/DC-SIGN and CLEC4M/DC-SIGNR, which are respectively found on dendritic cells (DCs), and on endothelial cells of liver sinusoids and lymph node sinuses. These interactions allow capture of viral particles at mucosal surfaces by these cells and subsequent transmission to permissive cells. HIV subverts the migration properties of dendritic cells to gain access to CD4+ T-cells in lymph nodes. Virus transmission to permissive T-cells occurs either in trans (without DCs infection, through viral capture and transmission), or in cis (following DCs productive infection, through the usual CD4-gp120 interaction), thereby inducing a robust infection. In trans infection, bound virions remain infectious over days and it is proposed that they are not degraded, but protected in non-lysosomal acidic organelles within the DCs close to the cell membrane thus contributing to the viral infectious potential during DCs' migration from the periphery to the lymphoid tissues. On arrival at lymphoid tissues, intact virions recycle back to DCs' cell surface allowing virus transmission to CD4+ T-cells. Acts as a class I viral fusion protein. Under the current model, the protein has at least 3 conformational states: pre-fusion native state, pre-hairpin intermediate state, and post-fusion hairpin state. During fusion of viral and target intracellular membranes, the coiled coil regions (heptad repeats) assume a trimer-of-hairpins structure, positioning the fusion peptide in close proximity to the C-terminal region of the ectodomain. The formation of this structure appears to drive apposition and subsequent fusion of viral and target cell membranes. Complete fusion occurs in host cell endosomes and is dynamin-dependent, however some lipid transfer might occur at the plasma membrane. The virus undergoes clathrin-dependent internalization long before endosomal fusion, thus minimizing the surface exposure of conserved viral epitopes during fusion and reducing the efficacy of inhibitors targeting these epitopes. Membranes fusion leads to delivery of the nucleocapsid into the cytoplasm. The protein is Envelope glycoprotein gp160 of Homo sapiens (Human).